A 375-amino-acid polypeptide reads, in one-letter code: 4,4'-diaponeurosporenoate glycosyltransferase (375 aa).

The next 4 membrane-spanning stretches (helical) occupy residues 3 to 23 (WLSR…ALIF), 164 to 184 (FYEG…NVFS), 277 to 297 (IMAA…GLCL), and 330 to 350 (FSNL…KIFI).

The protein belongs to the glycosyltransferase 2 family. CrtQ subfamily.

It localises to the cell membrane. It participates in carotenoid biosynthesis; staphyloxanthin biosynthesis; staphyloxanthin from farnesyl diphosphate: step 4/5. Its function is as follows. Catalyzes the glycosylation of 4,4'-diaponeurosporenoate, i.e. the esterification of glucose at the C1'' position with the carboxyl group of 4,4'-diaponeurosporenic acid, to form glycosyl-4,4'-diaponeurosporenoate. This is a step in the biosynthesis of staphyloxanthin, an orange pigment present in most staphylococci strains. In Staphylococcus aureus (strain bovine RF122 / ET3-1), this protein is 4,4'-diaponeurosporenoate glycosyltransferase (crtQ).